The following is a 431-amino-acid chain: Putative transcription factor R429 (431 aa).

Residues 28–95 adopt a coiled-coil conformation; it reads NKFENMSKAL…SIENCSESLD (68 aa). Residues 142–187 form a disordered region; that stretch reads SQQENSSESNNDIVKNGTGGSTSKRKKIQPSNRCSGSKTGKVTETK. The segment covering 143–152 has biased composition (low complexity); that stretch reads QQENSSESNN. Positions 170–181 are enriched in polar residues; sequence QPSNRCSGSKTG. The segment at 218–241 is a zinc-finger region; the sequence is CSVPDCDGEKILNQNDGYMVCKKC.

It belongs to the nucleo-cytoplasmic large DNA viruses (NCLDVs) VLTF-3 family.

Putative transcription factor. The sequence is that of Putative transcription factor R429 from Acanthamoeba polyphaga (Amoeba).